A 241-amino-acid chain; its full sequence is 1-(5-phosphoribosyl)-5-[(5-phosphoribosylamino)methylideneamino] imidazole-4-carboxamide isomerase (241 aa).

D8 serves as the catalytic Proton acceptor. D130 functions as the Proton donor in the catalytic mechanism.

It belongs to the HisA/HisF family.

It localises to the cytoplasm. The enzyme catalyses 1-(5-phospho-beta-D-ribosyl)-5-[(5-phospho-beta-D-ribosylamino)methylideneamino]imidazole-4-carboxamide = 5-[(5-phospho-1-deoxy-D-ribulos-1-ylimino)methylamino]-1-(5-phospho-beta-D-ribosyl)imidazole-4-carboxamide. The protein operates within amino-acid biosynthesis; L-histidine biosynthesis; L-histidine from 5-phospho-alpha-D-ribose 1-diphosphate: step 4/9. This chain is 1-(5-phosphoribosyl)-5-[(5-phosphoribosylamino)methylideneamino] imidazole-4-carboxamide isomerase, found in Flavobacterium psychrophilum (strain ATCC 49511 / DSM 21280 / CIP 103535 / JIP02/86).